Here is a 75-residue protein sequence, read N- to C-terminus: MARYFRRRKFCRFTAEGVAEIDYKDIATLKNYITESGKIVPSRITGTSAKYQRQLARAIKRARYLSLLPYTDLHQ.

The protein belongs to the bacterial ribosomal protein bS18 family. In terms of assembly, part of the 30S ribosomal subunit. Forms a tight heterodimer with protein bS6.

In terms of biological role, binds as a heterodimer with protein bS6 to the central domain of the 16S rRNA, where it helps stabilize the platform of the 30S subunit. The sequence is that of Small ribosomal subunit protein bS18 from Shewanella amazonensis (strain ATCC BAA-1098 / SB2B).